A 443-amino-acid chain; its full sequence is Thymidine phosphorylase (443 aa).

Belongs to the thymidine/pyrimidine-nucleoside phosphorylase family. Homodimer.

It carries out the reaction thymidine + phosphate = 2-deoxy-alpha-D-ribose 1-phosphate + thymine. The protein operates within pyrimidine metabolism; dTMP biosynthesis via salvage pathway; dTMP from thymine: step 1/2. The enzymes which catalyze the reversible phosphorolysis of pyrimidine nucleosides are involved in the degradation of these compounds and in their utilization as carbon and energy sources, or in the rescue of pyrimidine bases for nucleotide synthesis. This Aeromonas hydrophila subsp. hydrophila (strain ATCC 7966 / DSM 30187 / BCRC 13018 / CCUG 14551 / JCM 1027 / KCTC 2358 / NCIMB 9240 / NCTC 8049) protein is Thymidine phosphorylase.